Reading from the N-terminus, the 436-residue chain is Acetyl-CoA decarbonylase/synthase complex subunit delta 1 (436 aa).

This sequence belongs to the CdhD family. In terms of assembly, heterodimer of delta and gamma chains. The ACDS complex is made up of alpha, epsilon, beta, gamma and delta chains with a probable stoichiometry of (alpha(2)epsilon(2))(4)-beta(8)-(gamma(1)delta(1))(8) (Potential).

It participates in one-carbon metabolism; methanogenesis from acetate. In terms of biological role, part of a complex that catalyzes the reversible cleavage of acetyl-CoA, allowing growth on acetate as sole source of carbon and energy. Probably maintains the overall quaternary structure of the ACDS complex. This Methanosarcina thermophila protein is Acetyl-CoA decarbonylase/synthase complex subunit delta 1 (cdhD1).